Reading from the N-terminus, the 298-residue chain is tRNA dimethylallyltransferase (298 aa).

16 to 23 (GPTASGKS) serves as a coordination point for ATP. 18–23 (TASGKS) contributes to the substrate binding site. Interaction with substrate tRNA regions lie at residues 41–44 (DSMQ) and 165–169 (QRIVR).

It belongs to the IPP transferase family. Monomer. Mg(2+) serves as cofactor.

The catalysed reaction is adenosine(37) in tRNA + dimethylallyl diphosphate = N(6)-dimethylallyladenosine(37) in tRNA + diphosphate. Catalyzes the transfer of a dimethylallyl group onto the adenine at position 37 in tRNAs that read codons beginning with uridine, leading to the formation of N6-(dimethylallyl)adenosine (i(6)A). This Rhizobium radiobacter (Agrobacterium tumefaciens) protein is tRNA dimethylallyltransferase.